We begin with the raw amino-acid sequence, 85 residues long: Large ribosomal subunit protein bL31B (85 aa).

Belongs to the bacterial ribosomal protein bL31 family. Type B subfamily. Part of the 50S ribosomal subunit.

This chain is Large ribosomal subunit protein bL31B, found in Staphylococcus haemolyticus (strain JCSC1435).